The sequence spans 308 residues: 4-hydroxy-3-methylbut-2-enyl diphosphate reductase (308 aa).

C12 contacts [4Fe-4S] cluster. The (2E)-4-hydroxy-3-methylbut-2-enyl diphosphate site is built by H41 and H74. Positions 41 and 74 each coordinate dimethylallyl diphosphate. Isopentenyl diphosphate contacts are provided by H41 and H74. C96 is a [4Fe-4S] cluster binding site. H124 is a (2E)-4-hydroxy-3-methylbut-2-enyl diphosphate binding site. H124 provides a ligand contact to dimethylallyl diphosphate. Isopentenyl diphosphate is bound at residue H124. E126 (proton donor) is an active-site residue. Residue T166 coordinates (2E)-4-hydroxy-3-methylbut-2-enyl diphosphate. Residue C196 coordinates [4Fe-4S] cluster. (2E)-4-hydroxy-3-methylbut-2-enyl diphosphate contacts are provided by S224, S225, N226, and S268. Residues S224, S225, N226, and S268 each contribute to the dimethylallyl diphosphate site. Residues S224, S225, N226, and S268 each contribute to the isopentenyl diphosphate site.

The protein belongs to the IspH family. [4Fe-4S] cluster serves as cofactor.

The catalysed reaction is isopentenyl diphosphate + 2 oxidized [2Fe-2S]-[ferredoxin] + H2O = (2E)-4-hydroxy-3-methylbut-2-enyl diphosphate + 2 reduced [2Fe-2S]-[ferredoxin] + 2 H(+). It carries out the reaction dimethylallyl diphosphate + 2 oxidized [2Fe-2S]-[ferredoxin] + H2O = (2E)-4-hydroxy-3-methylbut-2-enyl diphosphate + 2 reduced [2Fe-2S]-[ferredoxin] + 2 H(+). Its pathway is isoprenoid biosynthesis; dimethylallyl diphosphate biosynthesis; dimethylallyl diphosphate from (2E)-4-hydroxy-3-methylbutenyl diphosphate: step 1/1. It participates in isoprenoid biosynthesis; isopentenyl diphosphate biosynthesis via DXP pathway; isopentenyl diphosphate from 1-deoxy-D-xylulose 5-phosphate: step 6/6. Functionally, catalyzes the conversion of 1-hydroxy-2-methyl-2-(E)-butenyl 4-diphosphate (HMBPP) into a mixture of isopentenyl diphosphate (IPP) and dimethylallyl diphosphate (DMAPP). Acts in the terminal step of the DOXP/MEP pathway for isoprenoid precursor biosynthesis. This Vesicomyosocius okutanii subsp. Calyptogena okutanii (strain HA) protein is 4-hydroxy-3-methylbut-2-enyl diphosphate reductase.